The chain runs to 294 residues: 33 kDa chaperonin (294 aa).

Cystine bridges form between C238–C240 and C271–C274.

Belongs to the HSP33 family. Post-translationally, under oxidizing conditions two disulfide bonds are formed involving the reactive cysteines. Under reducing conditions zinc is bound to the reactive cysteines and the protein is inactive.

Its subcellular location is the cytoplasm. In terms of biological role, redox regulated molecular chaperone. Protects both thermally unfolding and oxidatively damaged proteins from irreversible aggregation. Plays an important role in the bacterial defense system toward oxidative stress. This chain is 33 kDa chaperonin, found in Clostridium novyi (strain NT).